Reading from the N-terminus, the 343-residue chain is Anthranilate phosphoribosyltransferase (343 aa).

Residues G84, 87–88 (GD), T92, 94–97 (NIST), 112–120 (KHGNRGVSS), and S124 each bind 5-phospho-alpha-D-ribose 1-diphosphate. G84 serves as a coordination point for anthranilate. A Mg(2+)-binding site is contributed by S96. N115 contacts anthranilate. An anthranilate-binding site is contributed by R170. 2 residues coordinate Mg(2+): D229 and E230.

Belongs to the anthranilate phosphoribosyltransferase family. As to quaternary structure, homodimer. It depends on Mg(2+) as a cofactor.

It carries out the reaction N-(5-phospho-beta-D-ribosyl)anthranilate + diphosphate = 5-phospho-alpha-D-ribose 1-diphosphate + anthranilate. It functions in the pathway amino-acid biosynthesis; L-tryptophan biosynthesis; L-tryptophan from chorismate: step 2/5. Catalyzes the transfer of the phosphoribosyl group of 5-phosphorylribose-1-pyrophosphate (PRPP) to anthranilate to yield N-(5'-phosphoribosyl)-anthranilate (PRA). The polypeptide is Anthranilate phosphoribosyltransferase (Burkholderia orbicola (strain AU 1054)).